The following is an 891-amino-acid chain: Alanine--tRNA ligase (891 aa).

His-569, His-573, Cys-671, and His-675 together coordinate Zn(2+).

It belongs to the class-II aminoacyl-tRNA synthetase family. As to quaternary structure, homotetramer. It depends on Zn(2+) as a cofactor.

It is found in the cytoplasm. It catalyses the reaction tRNA(Ala) + L-alanine + ATP = L-alanyl-tRNA(Ala) + AMP + diphosphate. Functionally, catalyzes the attachment of alanine to tRNA(Ala) in a two-step reaction: alanine is first activated by ATP to form Ala-AMP and then transferred to the acceptor end of tRNA(Ala). Also edits incorrectly charged Ser-tRNA(Ala) and Gly-tRNA(Ala) via its editing domain. The polypeptide is Alanine--tRNA ligase (Blochmanniella floridana).